Here is a 271-residue protein sequence, read N- to C-terminus: DNA repair protein RecO (271 aa).

Residues 248–271 form a disordered region; it reads AVGVEDSVRQDGDRDSTTRTPSSA. The segment covering 253–264 has biased composition (basic and acidic residues); it reads DSVRQDGDRDST.

Belongs to the RecO family.

In terms of biological role, involved in DNA repair and RecF pathway recombination. The chain is DNA repair protein RecO from Rhodococcus opacus (strain B4).